Consider the following 254-residue polypeptide: 5'/3'-nucleotidase SurE (254 aa).

Positions 9, 10, 40, and 93 each coordinate a divalent metal cation.

This sequence belongs to the SurE nucleotidase family. A divalent metal cation is required as a cofactor.

The protein resides in the cytoplasm. The enzyme catalyses a ribonucleoside 5'-phosphate + H2O = a ribonucleoside + phosphate. The catalysed reaction is a ribonucleoside 3'-phosphate + H2O = a ribonucleoside + phosphate. It catalyses the reaction [phosphate](n) + H2O = [phosphate](n-1) + phosphate + H(+). Nucleotidase with a broad substrate specificity as it can dephosphorylate various ribo- and deoxyribonucleoside 5'-monophosphates and ribonucleoside 3'-monophosphates with highest affinity to 3'-AMP. Also hydrolyzes polyphosphate (exopolyphosphatase activity) with the preference for short-chain-length substrates (P20-25). Might be involved in the regulation of dNTP and NTP pools, and in the turnover of 3'-mononucleotides produced by numerous intracellular RNases (T1, T2, and F) during the degradation of various RNAs. The sequence is that of 5'/3'-nucleotidase SurE from Yersinia pestis bv. Antiqua (strain Antiqua).